A 290-amino-acid chain; its full sequence is MRGFSGQPLSDDDNYRIEKTQRNTIPERLHFSRERNMPIASIFGTRGYFVFSSEQSYDKFKQTNFNISTLDADGVGVPLFHIVQSYNVIGKITRSSPDFYIYKYVLQGVQDPPLYSDCKVICQDKVFRLCKILYCEIYAHQGFFETKYDFFYPSKTQPVKKYQIIKQSNMRDLYSTLDGMRFRWHVKFYSDHFRLMFLDEDRLNYSNSNQKERQKPDQGKSKAPDFVIGHYTRTFSDILPRSTSKCSNLIIGEHSKPDSLGITTVPDLTQEFACQGALIHYLLHIERERK.

It is found in the cytoplasm. This is an uncharacterized protein from Saccharomyces cerevisiae (strain ATCC 204508 / S288c) (Baker's yeast).